The chain runs to 261 residues: Cytochrome c oxidase subunit 3 (261 aa).

Topologically, residues 1 to 15 are mitochondrial matrix; it reads MTHQTHAYHMVNPSP. A helical membrane pass occupies residues 16-34; it reads WPLTGALSALLMTSGLIMW. Topologically, residues 35-40 are mitochondrial intermembrane; the sequence is FHFNST. Residues 41–66 traverse the membrane as a helical segment; that stretch reads TLLMLGLTTNMLTMYQWWRDVIREST. Topologically, residues 67–72 are mitochondrial matrix; sequence FQGHHT. A helical membrane pass occupies residues 73–105; it reads PNVQKGLRYGMILFIISEVLFFTGFFWAFYHSS. The Mitochondrial intermembrane portion of the chain corresponds to 106-128; sequence LAPTPELGGCWPPTGIHPLNPLE. A helical membrane pass occupies residues 129–152; it reads VPLLNTSVLLASGVSITWAHHSLM. The Mitochondrial matrix portion of the chain corresponds to 153-155; it reads EGN. Residues 156–183 form a helical membrane-spanning segment; that stretch reads RNHMLQALFITIALGVYFTLLQASEYYE. Residues 184–190 lie on the Mitochondrial intermembrane side of the membrane; it reads APFTISD. The chain crosses the membrane as a helical span at residues 191 to 223; it reads GVYGSTFFVATGFHGLHVIIGSTFLIVCFFRQL. The Mitochondrial matrix portion of the chain corresponds to 224-232; sequence KFHFTSSHH. Residues 233 to 256 form a helical membrane-spanning segment; sequence FGFEAAAWYWHFVDVVWLFLYVSI. The Mitochondrial intermembrane segment spans residues 257 to 261; that stretch reads YWWGS.

This sequence belongs to the cytochrome c oxidase subunit 3 family. As to quaternary structure, component of the cytochrome c oxidase (complex IV, CIV), a multisubunit enzyme composed of 14 subunits. The complex is composed of a catalytic core of 3 subunits MT-CO1, MT-CO2 and MT-CO3, encoded in the mitochondrial DNA, and 11 supernumerary subunits COX4I, COX5A, COX5B, COX6A, COX6B, COX6C, COX7A, COX7B, COX7C, COX8 and NDUFA4, which are encoded in the nuclear genome. The complex exists as a monomer or a dimer and forms supercomplexes (SCs) in the inner mitochondrial membrane with NADH-ubiquinone oxidoreductase (complex I, CI) and ubiquinol-cytochrome c oxidoreductase (cytochrome b-c1 complex, complex III, CIII), resulting in different assemblies (supercomplex SCI(1)III(2)IV(1) and megacomplex MCI(2)III(2)IV(2)).

It is found in the mitochondrion inner membrane. It catalyses the reaction 4 Fe(II)-[cytochrome c] + O2 + 8 H(+)(in) = 4 Fe(III)-[cytochrome c] + 2 H2O + 4 H(+)(out). Component of the cytochrome c oxidase, the last enzyme in the mitochondrial electron transport chain which drives oxidative phosphorylation. The respiratory chain contains 3 multisubunit complexes succinate dehydrogenase (complex II, CII), ubiquinol-cytochrome c oxidoreductase (cytochrome b-c1 complex, complex III, CIII) and cytochrome c oxidase (complex IV, CIV), that cooperate to transfer electrons derived from NADH and succinate to molecular oxygen, creating an electrochemical gradient over the inner membrane that drives transmembrane transport and the ATP synthase. Cytochrome c oxidase is the component of the respiratory chain that catalyzes the reduction of oxygen to water. Electrons originating from reduced cytochrome c in the intermembrane space (IMS) are transferred via the dinuclear copper A center (CU(A)) of subunit 2 and heme A of subunit 1 to the active site in subunit 1, a binuclear center (BNC) formed by heme A3 and copper B (CU(B)). The BNC reduces molecular oxygen to 2 water molecules using 4 electrons from cytochrome c in the IMS and 4 protons from the mitochondrial matrix. This Gazella bennettii (Chinkara) protein is Cytochrome c oxidase subunit 3 (MT-CO3).